Here is a 637-residue protein sequence, read N- to C-terminus: Chaperone protein DnaK (637 aa).

T198 carries the phosphothreonine; by autocatalysis modification. The interval 597 to 637 is disordered; that stretch reads MYQQAAQESGQTEGAAQDPKGAAQDDDVVDADFEEVKDHKK. Polar residues predominate over residues 600–610; the sequence is QAAQESGQTEG. Residues 620-629 show a composition bias toward acidic residues; it reads QDDDVVDADF.

Belongs to the heat shock protein 70 family.

Acts as a chaperone. The sequence is that of Chaperone protein DnaK from Desulforapulum autotrophicum (strain ATCC 43914 / DSM 3382 / VKM B-1955 / HRM2) (Desulfobacterium autotrophicum).